We begin with the raw amino-acid sequence, 386 residues long: Queuine tRNA-ribosyltransferase (386 aa).

The active-site Proton acceptor is the D102. Residues 102 to 106 (DSGGY), D156, Q203, and G230 contribute to the substrate site. An RNA binding region spans residues 261 to 267 (GVGKPDD). D280 serves as the catalytic Nucleophile. The RNA binding; important for wobble base 34 recognition stretch occupies residues 285-289 (TRSGR). Zn(2+) is bound by residues C318, C320, C323, and H349.

This sequence belongs to the queuine tRNA-ribosyltransferase family. In terms of assembly, homodimer. Within each dimer, one monomer is responsible for RNA recognition and catalysis, while the other monomer binds to the replacement base PreQ1. Zn(2+) is required as a cofactor.

It catalyses the reaction 7-aminomethyl-7-carbaguanine + guanosine(34) in tRNA = 7-aminomethyl-7-carbaguanosine(34) in tRNA + guanine. The protein operates within tRNA modification; tRNA-queuosine biosynthesis. Catalyzes the base-exchange of a guanine (G) residue with the queuine precursor 7-aminomethyl-7-deazaguanine (PreQ1) at position 34 (anticodon wobble position) in tRNAs with GU(N) anticodons (tRNA-Asp, -Asn, -His and -Tyr). Catalysis occurs through a double-displacement mechanism. The nucleophile active site attacks the C1' of nucleotide 34 to detach the guanine base from the RNA, forming a covalent enzyme-RNA intermediate. The proton acceptor active site deprotonates the incoming PreQ1, allowing a nucleophilic attack on the C1' of the ribose to form the product. After dissociation, two additional enzymatic reactions on the tRNA convert PreQ1 to queuine (Q), resulting in the hypermodified nucleoside queuosine (7-(((4,5-cis-dihydroxy-2-cyclopenten-1-yl)amino)methyl)-7-deazaguanosine). The polypeptide is Queuine tRNA-ribosyltransferase (Zymomonas mobilis subsp. mobilis (strain ATCC 31821 / ZM4 / CP4)).